A 474-amino-acid chain; its full sequence is Chromosomal replication initiator protein DnaA (474 aa).

Residues 1–90 (MSSSLWLQCL…RQVVVPSSQI (90 aa)) are domain I, interacts with DnaA modulators. Residues 91–137 (IAPAAPAVTLAPRPLPATRILQDDAPSRSWEPAPSPVQPESKSGYRS) form a domain II region. Residues 112–137 (QDDAPSRSWEPAPSPVQPESKSGYRS) are disordered. The span at 128–137 (QPESKSGYRS) shows a compositional bias: polar residues. Positions 138–354 (NVNPKHNFNN…GALNRVIANA (217 aa)) are domain III, AAA+ region. Residues Gly182, Gly184, Lys185, and Thr186 each contribute to the ATP site. The tract at residues 355-474 (NFTGRAITID…YSNLIRTLST (120 aa)) is domain IV, binds dsDNA.

It belongs to the DnaA family. Oligomerizes as a right-handed, spiral filament on DNA at oriC.

The protein localises to the cytoplasm. Plays an essential role in the initiation and regulation of chromosomal replication. ATP-DnaA binds to the origin of replication (oriC) to initiate formation of the DNA replication initiation complex once per cell cycle. Binds the DnaA box (a 9 base pair repeat at the origin) and separates the double-stranded (ds)DNA. Forms a right-handed helical filament on oriC DNA; dsDNA binds to the exterior of the filament while single-stranded (ss)DNA is stabiized in the filament's interior. The ATP-DnaA-oriC complex binds and stabilizes one strand of the AT-rich DNA unwinding element (DUE), permitting loading of DNA polymerase. After initiation quickly degrades to an ADP-DnaA complex that is not apt for DNA replication. Binds acidic phospholipids. In Photobacterium profundum (strain SS9), this protein is Chromosomal replication initiator protein DnaA.